Consider the following 485-residue polypeptide: NADH-quinone oxidoreductase subunit N (485 aa).

14 helical membrane-spanning segments follow: residues 8–28 (LIALLPLLIVGLTVVVVMLSI), 35–55 (FLNATLSVVGLNAALLSLWFV), 75–95 (LYTGLVLLASLATCTFAYPWL), 105–125 (FYLLVLIAALGGILLANANHL), 127–147 (SLFLGIELISLPLFGLVGYAF), 159–179 (YTILSAAASSFLLFGMALVYA), 203–223 (LLAGLGLMIVGLGFKLSLVPF), 235–255 (PAPVSTFLATASKIAIFGVVM), 271–291 (VVLGVLAFASILFGNLMALTQ), 297–317 (LLGYSSISHLGYLLVALIALK), 326–346 (VGVYLAGYLFSSLGAFGVVSL), 374–394 (AVMTVMMLSLAGIPMTLGFIG), 408–427 (WWLTGAVVVGSAIGLYYYLR), and 455–475 (VVVLISALLVLVLGVWPQPLI).

The protein belongs to the complex I subunit 2 family. NDH-1 is composed of 13 different subunits. Subunits NuoA, H, J, K, L, M, N constitute the membrane sector of the complex.

The protein resides in the cell inner membrane. It catalyses the reaction a quinone + NADH + 5 H(+)(in) = a quinol + NAD(+) + 4 H(+)(out). Its function is as follows. NDH-1 shuttles electrons from NADH, via FMN and iron-sulfur (Fe-S) centers, to quinones in the respiratory chain. The immediate electron acceptor for the enzyme in this species is believed to be ubiquinone. Couples the redox reaction to proton translocation (for every two electrons transferred, four hydrogen ions are translocated across the cytoplasmic membrane), and thus conserves the redox energy in a proton gradient. This Cronobacter sakazakii (strain ATCC BAA-894) (Enterobacter sakazakii) protein is NADH-quinone oxidoreductase subunit N.